The sequence spans 134 residues: Phosphoribosyl-AMP cyclohydrolase (134 aa).

Aspartate 80 contributes to the Mg(2+) binding site. Cysteine 81 is a binding site for Zn(2+). Mg(2+)-binding residues include aspartate 82 and aspartate 84. Residues cysteine 98 and cysteine 105 each contribute to the Zn(2+) site.

The protein belongs to the PRA-CH family. As to quaternary structure, homodimer. The cofactor is Mg(2+). Zn(2+) serves as cofactor.

It is found in the cytoplasm. It catalyses the reaction 1-(5-phospho-beta-D-ribosyl)-5'-AMP + H2O = 1-(5-phospho-beta-D-ribosyl)-5-[(5-phospho-beta-D-ribosylamino)methylideneamino]imidazole-4-carboxamide. The protein operates within amino-acid biosynthesis; L-histidine biosynthesis; L-histidine from 5-phospho-alpha-D-ribose 1-diphosphate: step 3/9. Catalyzes the hydrolysis of the adenine ring of phosphoribosyl-AMP. In Herminiimonas arsenicoxydans, this protein is Phosphoribosyl-AMP cyclohydrolase.